We begin with the raw amino-acid sequence, 459 residues long: tRNA modification GTPase MnmE (459 aa).

Positions 24, 82, and 122 each coordinate (6S)-5-formyl-5,6,7,8-tetrahydrofolate. The TrmE-type G domain occupies 219–379 (GIKVVISGAP…LRQHLYFSFK (161 aa)). GTP contacts are provided by residues 229 to 234 (NSGKSS), 248 to 254 (TNFPGTT), and 273 to 276 (DTAG). Mg(2+) contacts are provided by Ser233 and Thr254. Lys459 serves as a coordination point for (6S)-5-formyl-5,6,7,8-tetrahydrofolate.

This sequence belongs to the TRAFAC class TrmE-Era-EngA-EngB-Septin-like GTPase superfamily. TrmE GTPase family. As to quaternary structure, homodimer. Heterotetramer of two MnmE and two MnmG subunits. K(+) is required as a cofactor.

It localises to the cytoplasm. Functionally, exhibits a very high intrinsic GTPase hydrolysis rate. Involved in the addition of a carboxymethylaminomethyl (cmnm) group at the wobble position (U34) of certain tRNAs, forming tRNA-cmnm(5)s(2)U34. In Buchnera aphidicola subsp. Baizongia pistaciae (strain Bp), this protein is tRNA modification GTPase MnmE.